Consider the following 147-residue polypeptide: Hemoglobin subunit beta-1 (147 aa).

Positions 3 to 147 (HWTDFERSTI…VVFSLGKQYH (145 aa)) constitute a Globin domain. The heme b site is built by His-64 and His-93.

Belongs to the globin family. As to quaternary structure, hb1 is a heterotetramer of two alpha-1 chains and two beta-1 chains. Red blood cells.

Functionally, involved in oxygen transport from gills to the various peripheral tissues. The sequence is that of Hemoglobin subunit beta-1 from Liparis tunicatus (Kelp snailfish).